A 368-amino-acid polypeptide reads, in one-letter code: 7,8-didemethyl-8-hydroxy-5-deazariboflavin synthase (368 aa).

The Radical SAM core domain maps to 36 to 272 (LSYCRNVFLP…EEVSVQVPPN (237 aa)). [4Fe-4S] cluster is bound by residues cysteine 50, cysteine 54, and cysteine 57.

Belongs to the radical SAM superfamily. CofG family. Consists of two subunits, CofG and CofH. [4Fe-4S] cluster serves as cofactor.

The enzyme catalyses 5-amino-5-(4-hydroxybenzyl)-6-(D-ribitylimino)-5,6-dihydrouracil + S-adenosyl-L-methionine = 7,8-didemethyl-8-hydroxy-5-deazariboflavin + 5'-deoxyadenosine + L-methionine + NH4(+) + H(+). Its pathway is cofactor biosynthesis; coenzyme F0 biosynthesis. Catalyzes the radical-mediated synthesis of 7,8-didemethyl-8-hydroxy-5-deazariboflavin from 5-amino-5-(4-hydroxybenzyl)-6-(D-ribitylimino)-5,6-dihydrouracil. This is 7,8-didemethyl-8-hydroxy-5-deazariboflavin synthase from Haloarcula marismortui (strain ATCC 43049 / DSM 3752 / JCM 8966 / VKM B-1809) (Halobacterium marismortui).